The chain runs to 200 residues: TATA-box-binding protein 2 (200 aa).

A run of 2 repeats spans residues 25-101 and 115-192.

This sequence belongs to the TBP family. In terms of assembly, belongs to the TFIID complex together with the TBP-associated factors (TAFs). Binds DNA as monomer. Interacts with TAF1 (via N-terminus). Interacts with TFIIB1. Interacts with PTF2. Interacts with HAT5/ATHB-1 and ATHB-7. Component of a nuclear protein complex containing at least TATA binding proteins (TBPs, e.g. TBP1 and TBP2) and ATX1.

Its subcellular location is the nucleus. Functionally, general transcription factor (GTF) that functions at the core of the DNA-binding multiprotein factor TFIID. Binding of TFIID to the TATA box is the initial transcriptional step of the pre-initiation complex (PIC), playing a role in the activation of eukaryotic genes transcribed by RNA polymerase II. Interacts with TFIIB1 and is required for activated transcription and possibly basal transcription. May act as GTF of RNA polymerase I-dependent transcription and rRNA synthesis. Forms a ternary complex with PBRP1 and the rDNA promoter region. This is TATA-box-binding protein 2 from Arabidopsis thaliana (Mouse-ear cress).